Reading from the N-terminus, the 86-residue chain is Small ribosomal subunit protein bS20 (86 aa).

Basic residues predominate over residues 1–11; sequence MANIKQQKKRN. A disordered region spans residues 1 to 20; that stretch reads MANIKQQKKRNKTNEKRRLQ.

The protein belongs to the bacterial ribosomal protein bS20 family.

Binds directly to 16S ribosomal RNA. This chain is Small ribosomal subunit protein bS20, found in Aster yellows witches'-broom phytoplasma (strain AYWB).